A 901-amino-acid chain; its full sequence is Desmocollin-2 (901 aa).

The N-terminal stretch at 1–27 (MEAARPSGSWNGALCRLLLLTLAILIF) is a signal peptide. The propeptide occupies 28–135 (ASDACKNVTL…KEKVLRRAKR (108 aa)). Asn34 and Asn166 each carry an N-linked (GlcNAc...) asparagine glycan. Cadherin domains are found at residues 136–243 (RWAP…YPIF), 244–355 (TEET…LPTF), 356–471 (TRTS…GPEC), 472–579 (NPPI…FIPK), and 580–694 (KTVI…QLGK). The Extracellular segment spans residues 136 to 694 (RWAPIPCSML…IGGGGVQLGK (559 aa)). N-linked (GlcNAc...) (complex) asparagine glycosylation occurs at Asn392. Residues Asn546 and Asn629 are each glycosylated (N-linked (GlcNAc...) asparagine). A helical transmembrane segment spans residues 695–715 (WAILAILLGIALLFCILFTLV). Residues 716–901 (CGASGTSKQP…RTLAEACMKR (186 aa)) are Cytoplasmic-facing. A phosphoserine mark is found at Ser864, Ser868, and Ser873.

In terms of assembly, interacts with DSP, PKP2 and JUP. Interacts with DSG3; the interaction may limit the interaction of DSC3 with p38MAPK family members and therefore repress p38MAPK signaling activation. In terms of tissue distribution, expressed at intercalated disks in the heart, where it is colocalized with CDH2 (at protein level). Expressed in intestinal mucosal cells (at protein level).

It is found in the cell membrane. Its subcellular location is the cell junction. It localises to the desmosome. In terms of biological role, a component of desmosome cell-cell junctions which are required for positive regulation of cellular adhesion. Promotes timely incorporation of DSG2 into desmosome intercellular junctions and promotes interaction of desmosome cell junctions with intermediate filament cytokeratin, via modulation of DSP phosphorylation. Plays an important role in desmosome-mediated maintenance of intestinal epithelial cell intercellular adhesion strength and barrier function. Positively regulates wound healing of intestinal mucosa via promotion of epithelial cell migration, and also plays a role in mechanotransduction of force between intestinal epithelial cells and extracellular matrix. May contribute to epidermal cell positioning (stratification) by mediating differential adhesiveness between cells that express different isoforms. May promote p38MAPK signaling activation that facilitates keratinocyte migration. This is Desmocollin-2 from Homo sapiens (Human).